The sequence spans 619 residues: 1-deoxy-D-xylulose-5-phosphate synthase (619 aa).

Thiamine diphosphate contacts are provided by residues His74 and 115-117 (GHS). Asp146 contacts Mg(2+). Residues 147 to 148 (GA), Asn175, Tyr285, and Glu365 contribute to the thiamine diphosphate site. A Mg(2+)-binding site is contributed by Asn175.

This sequence belongs to the transketolase family. DXPS subfamily. Homodimer. It depends on Mg(2+) as a cofactor. Requires thiamine diphosphate as cofactor.

The enzyme catalyses D-glyceraldehyde 3-phosphate + pyruvate + H(+) = 1-deoxy-D-xylulose 5-phosphate + CO2. It functions in the pathway metabolic intermediate biosynthesis; 1-deoxy-D-xylulose 5-phosphate biosynthesis; 1-deoxy-D-xylulose 5-phosphate from D-glyceraldehyde 3-phosphate and pyruvate: step 1/1. Catalyzes the acyloin condensation reaction between C atoms 2 and 3 of pyruvate and glyceraldehyde 3-phosphate to yield 1-deoxy-D-xylulose-5-phosphate (DXP). The chain is 1-deoxy-D-xylulose-5-phosphate synthase from Clostridium perfringens (strain ATCC 13124 / DSM 756 / JCM 1290 / NCIMB 6125 / NCTC 8237 / Type A).